The following is a 403-amino-acid chain: Argininosuccinate synthase (403 aa).

8 to 16 (AYSGGLDTS) lines the ATP pocket. Tyr-87 contributes to the L-citrulline binding site. An ATP-binding site is contributed by Gly-117. Residues Thr-119, Asn-123, and Asp-124 each contribute to the L-aspartate site. Asn-123 contributes to the L-citrulline binding site. Residues Arg-127, Ser-175, Glu-259, and Tyr-271 each contribute to the L-citrulline site.

This sequence belongs to the argininosuccinate synthase family. Type 1 subfamily. In terms of assembly, homotetramer.

The protein resides in the cytoplasm. The catalysed reaction is L-citrulline + L-aspartate + ATP = 2-(N(omega)-L-arginino)succinate + AMP + diphosphate + H(+). It functions in the pathway amino-acid biosynthesis; L-arginine biosynthesis; L-arginine from L-ornithine and carbamoyl phosphate: step 2/3. This is Argininosuccinate synthase from Salinispora arenicola (strain CNS-205).